Here is a 96-residue protein sequence, read N- to C-terminus: Large ribosomal subunit protein bL27 (96 aa).

Positions 1–9 (MLNMNLQLL) are excised as a propeptide.

The protein belongs to the bacterial ribosomal protein bL27 family. The N-terminus is cleaved by ribosomal processing cysteine protease Prp.

In Clostridioides difficile (strain 630) (Peptoclostridium difficile), this protein is Large ribosomal subunit protein bL27.